Here is a 1155-residue protein sequence, read N- to C-terminus: PAN2-PAN3 deadenylation complex catalytic subunit pan2 (1155 aa).

2 WD repeats span residues 102–145 (THED…DKLP) and 276–315 (ANVS…HFNE). The tract at residues 316 to 452 (MSKEVEFADV…GTKLNGEAED (137 aa)) is linker. Positions 453–822 (DPLLKYSNVE…VPCVLAYQVK (370 aa)) constitute a USP domain. The region spanning 871-1049 (VALDTEFVDL…IEDARMALRL (179 aa)) is the Exonuclease domain. Residues Asp-874, Glu-876, Asp-983, and Asp-1042 each coordinate a divalent metal cation. The interval 1095–1155 (TAVTMQNNSG…GDFFGGSPLK (61 aa)) is disordered. Residues 1097–1106 (VTMQNNSGRN) are compositionally biased toward polar residues. Low complexity predominate over residues 1107–1124 (TPSTPEVTAPTASAPTTP).

The protein belongs to the peptidase C19 family. PAN2 subfamily. As to quaternary structure, forms a heterotrimer with an asymmetric homodimer of the regulatory subunit pan3 to form the poly(A)-nuclease (PAN) deadenylation complex. The cofactor is a divalent metal cation.

Its subcellular location is the cytoplasm. It carries out the reaction Exonucleolytic cleavage of poly(A) to 5'-AMP.. Its activity is regulated as follows. Positively regulated by the regulatory subunit pan3. Its function is as follows. Catalytic subunit of the poly(A)-nuclease (PAN) deadenylation complex, one of two cytoplasmic mRNA deadenylases involved in mRNA turnover. PAN specifically shortens poly(A) tails of RNA and the activity is stimulated by poly(A)-binding protein pab1. PAN deadenylation is followed by rapid degradation of the shortened mRNA tails by the CCR4-NOT complex. Deadenylated mRNAs are then degraded by two alternative mechanisms, namely exosome-mediated 3'-5' exonucleolytic degradation, or deadenylation-dependent mRNA decaping and subsequent 5'-3' exonucleolytic degradation by xrn1. May also be involved in post-transcriptional maturation of mRNA poly(A) tails. In Aspergillus oryzae (strain ATCC 42149 / RIB 40) (Yellow koji mold), this protein is PAN2-PAN3 deadenylation complex catalytic subunit pan2.